The primary structure comprises 274 residues: Coiled-coil domain-containing protein 28A (274 aa).

The segment at 121–166 (VSKSTGFSNPASQSTSQRPKLKRVMKEKTKPQGGEGKGAQSTPIQH) is disordered. Residues 122–138 (SKSTGFSNPASQSTSQR) are compositionally biased toward polar residues. Residues 234 to 263 (KRKTASDSNLDRLLSDLEELNSSIQKLHLA) adopt a coiled-coil conformation.

The polypeptide is Coiled-coil domain-containing protein 28A (CCDC28A) (Homo sapiens (Human)).